A 747-amino-acid polypeptide reads, in one-letter code: Myotubularin-related protein 12 (747 aa).

Positions 205–643 (FDTPKDWCWE…PEIKVWAQRY (439 aa)) constitute a Myotubularin phosphatase domain. Residues 449–558 (VPIFLLFLDC…RGQQKGSRFK (110 aa)) are interaction with MTM1. Positions 548–575 (DRGQQKGSRFKHQRQLSLPLTQSKSSPK) are disordered. The segment covering 562-572 (QLSLPLTQSKS) has biased composition (polar residues). Residues serine 564 and serine 601 each carry the phosphoserine modification.

It belongs to the protein-tyrosine phosphatase family. Non-receptor class myotubularin subfamily. As to quaternary structure, heterodimer with lipid phosphatase MTM1. Heterodimer with lipid phosphatase MTMR2. In terms of tissue distribution, expressed in skeletal muscles (at protein level).

It is found in the cytoplasm. It localises to the sarcoplasmic reticulum. The protein localises to the myofibril. The protein resides in the sarcomere. Acts as an adapter for the myotubularin-related phosphatases. Regulates phosphatase MTM1 protein stability and possibly its intracellular location. By stabilizing MTM1 protein levels, required for skeletal muscle maintenance but not for myogenesis. In Mus musculus (Mouse), this protein is Myotubularin-related protein 12 (Mtmr12).